The following is a 463-amino-acid chain: Endoglucanase (463 aa).

Positions Met-1–Ala-27 are cleaved as a signal peptide. A propeptide spanning residues Ala-28 to Ala-55 is cleaved from the precursor. The active-site Proton donor is the Glu-130. Residue Asp-191 is the Nucleophile of the active site.

The protein belongs to the glycosyl hydrolase 8 (cellulase D) family. The N- and the C-terminus may be subjected to proteolysis.

It carries out the reaction Endohydrolysis of (1-&gt;4)-beta-D-glucosidic linkages in cellulose, lichenin and cereal beta-D-glucans.. This chain is Endoglucanase, found in Bacillus sp. (strain KSM-330).